The chain runs to 312 residues: Methionyl-tRNA formyltransferase (312 aa).

A (6S)-5,6,7,8-tetrahydrofolate-binding site is contributed by 111–114 (SLLP).

Belongs to the Fmt family.

The catalysed reaction is L-methionyl-tRNA(fMet) + (6R)-10-formyltetrahydrofolate = N-formyl-L-methionyl-tRNA(fMet) + (6S)-5,6,7,8-tetrahydrofolate + H(+). Its function is as follows. Attaches a formyl group to the free amino group of methionyl-tRNA(fMet). The formyl group appears to play a dual role in the initiator identity of N-formylmethionyl-tRNA by promoting its recognition by IF2 and preventing the misappropriation of this tRNA by the elongation apparatus. This Myxococcus xanthus (strain DK1622) protein is Methionyl-tRNA formyltransferase.